A 73-amino-acid chain; its full sequence is Putative antitoxin VapB16 (73 aa).

This sequence belongs to the UPF0330 family.

Functionally, possibly the antitoxin component of a type II toxin-antitoxin (TA) system. Its cognate toxin is VapC16 (Potential). This chain is Putative antitoxin VapB16 (vapB16), found in Archaeoglobus fulgidus (strain ATCC 49558 / DSM 4304 / JCM 9628 / NBRC 100126 / VC-16).